We begin with the raw amino-acid sequence, 955 residues long: 2-oxoglutarate dehydrogenase E1 component (955 aa).

This sequence belongs to the alpha-ketoglutarate dehydrogenase family. In terms of assembly, homodimer. Part of the 2-oxoglutarate dehydrogenase (OGDH) complex composed of E1 (2-oxoglutarate dehydrogenase), E2 (dihydrolipoamide succinyltransferase) and E3 (dihydrolipoamide dehydrogenase); the complex contains multiple copies of the three enzymatic components (E1, E2 and E3). Requires thiamine diphosphate as cofactor.

The catalysed reaction is N(6)-[(R)-lipoyl]-L-lysyl-[protein] + 2-oxoglutarate + H(+) = N(6)-[(R)-S(8)-succinyldihydrolipoyl]-L-lysyl-[protein] + CO2. Its function is as follows. E1 component of the 2-oxoglutarate dehydrogenase (OGDH) complex which catalyzes the decarboxylation of 2-oxoglutarate, the first step in the conversion of 2-oxoglutarate to succinyl-CoA and CO(2). The protein is 2-oxoglutarate dehydrogenase E1 component of Bacillus cereus (strain AH820).